Consider the following 485-residue polypeptide: Chitin synthase regulator 2 (485 aa).

Sel1-like repeat units lie at residues 164–202 (PDAQ…KHGH), 203–238 (PDAC…VGLH), 239–275 (PGAM…EHAT), 279–316 (PHAL…ELGY), 317–353 (APSA…QQDH), 354–391 (KDAC…ELGL), and 392–427 (AKAQ…EGGD). A disordered region spans residues 460-485 (AANLAQRSGSGSGASGKDGKDGCLIM). The span at 476-485 (KDGKDGCLIM) shows a compositional bias: basic and acidic residues. Residue C482 is modified to Cysteine methyl ester. C482 carries the S-farnesyl cysteine lipid modification. Positions 483 to 485 (LIM) are cleaved as a propeptide — removed in mature form.

This sequence belongs to the SKT5 family.

It is found in the cell membrane. In terms of biological role, activator of the chitin synthase CHS3 which polymerizes chitin, a structural polymer of the fungal cell wall. Chitin produced by CHS3 is deacetylated to chitosan, which helps to maintain cell wall integrity, anchor melanin, and offers an advantage during infection, as chitosan is less readily detected by host immunosurveillance. This Cryptococcus neoformans var. grubii serotype A (strain H99 / ATCC 208821 / CBS 10515 / FGSC 9487) (Filobasidiella neoformans var. grubii) protein is Chitin synthase regulator 2.